The chain runs to 570 residues: Carotenoid cleavage dioxygenase 8, chloroplastic (570 aa).

The transit peptide at 1 to 56 (MASLITTKAMMSHHHVLSSTRITTLYSDNSIGDQQIKTKPQVPHRLFARRIFGVTR) directs the protein to the chloroplast. Residues His-254, His-305, His-372, and His-563 each coordinate Fe cation.

The protein belongs to the carotenoid oxygenase family. The cofactor is Fe(2+). As to expression, expressed in flowers, siliques, inflorescence stems, petiole and leaves, and at a much higher level in roots.

The protein localises to the plastid. It localises to the chloroplast. The catalysed reaction is 9-cis-10'-apo-beta-carotenal + 2 O2 = (2E,4E,6E)-7-hydroxy-4-methylhepta-2,4,6-trienal + (11R)-carlactone. It carries out the reaction all-trans-10'-apo-beta-carotenal + O2 = (2E,4E,6E)-4-methylocta-2,4,6-trienedial + 13-apo-beta-carotenone. Involved in strigolactones biosynthesis by cleaving the C(27) 9-cis-10'-apo-beta-carotenal produced by CCD7. Produces the C(19) carlactone and a C(8) hydroxyaldehyde. Also shows lower activity with all-trans-10'-apo-beta-carotenal producing a C(9) dialdehyde and the C(18) 13-apo-beta-carotenone. Strigolactones are hormones that inhibit tillering and shoot branching through the MAX-dependent pathway, contribute to the regulation of shoot architectural response to phosphate-limiting conditions and function as rhizosphere signal that stimulates hyphal branching of arbuscular mycorrhizal fungi and trigger seed germination of root parasitic weeds. Also active on other carotenoid substrates like licopene or zeaxanthin. The polypeptide is Carotenoid cleavage dioxygenase 8, chloroplastic (Arabidopsis thaliana (Mouse-ear cress)).